A 139-amino-acid polypeptide reads, in one-letter code: ATP synthase epsilon chain (139 aa).

Belongs to the ATPase epsilon chain family. In terms of assembly, F-type ATPases have 2 components, CF(1) - the catalytic core - and CF(0) - the membrane proton channel. CF(1) has five subunits: alpha(3), beta(3), gamma(1), delta(1), epsilon(1). CF(0) has three main subunits: a, b and c.

It localises to the cell membrane. In terms of biological role, produces ATP from ADP in the presence of a proton gradient across the membrane. The sequence is that of ATP synthase epsilon chain from Levilactobacillus brevis (strain ATCC 367 / BCRC 12310 / CIP 105137 / JCM 1170 / LMG 11437 / NCIMB 947 / NCTC 947) (Lactobacillus brevis).